We begin with the raw amino-acid sequence, 140 residues long: Holo-[acyl-carrier-protein] synthase (140 aa).

Mg(2+) is bound by residues aspartate 9 and glutamate 63.

The protein belongs to the P-Pant transferase superfamily. AcpS family. Mg(2+) serves as cofactor.

The protein localises to the cytoplasm. The catalysed reaction is apo-[ACP] + CoA = holo-[ACP] + adenosine 3',5'-bisphosphate + H(+). Its function is as follows. Transfers the 4'-phosphopantetheine moiety from coenzyme A to a Ser of acyl-carrier-protein. This is Holo-[acyl-carrier-protein] synthase from Paraburkholderia phytofirmans (strain DSM 17436 / LMG 22146 / PsJN) (Burkholderia phytofirmans).